Reading from the N-terminus, the 503-residue chain is MEFSVKSGSPEKQRSACIVVGVFEPRRLSPIAEQLDKISDGYISTLLRRGELEGKVGQTLLLHHVPNVLSERILLIGCGKERELDERQYKQVINKTINTLNDTGSMEAVCFLTELHVKGRNTYWKVRQAVETAKETLYTFDQLKSNKIEPRRPLRKMVFNVPTRRELTSGERAISHGLAIAAGIKAAKDLGNMPPNICNPAYLASQARQLADGYGKTTTTRVIGEQQMKELGMNAYLAVGQGSANESLMSVIEYKGSPDADARPIVLVGKGLTFDAGGISIKPADSMDEMKYDMCGAATVYGVMRMAMELNLPLNIVGVLAGCENMVDGRAFRPGDVLTTLSGQTVEVLNTDAEGRLVLCDALTYVERFEPEVVIDVATLTGACVIALGHHLTGLVSNHNPLAHELIGAAEQAGDRAWRLPLGDEFQEQLESNFADMANIGGRPGGAITAGCFLSRFARKYNWAHLDIAGTAWRSGKAKGATGRPVAMLSQFLLNRTGLNGDE.

Residues K270 and D275 each coordinate Mn(2+). Residue K282 is part of the active site. 3 residues coordinate Mn(2+): D293, D352, and E354. Residue R356 is part of the active site.

The protein belongs to the peptidase M17 family. The cofactor is Mn(2+).

Its subcellular location is the cytoplasm. The enzyme catalyses Release of an N-terminal amino acid, Xaa-|-Yaa-, in which Xaa is preferably Leu, but may be other amino acids including Pro although not Arg or Lys, and Yaa may be Pro. Amino acid amides and methyl esters are also readily hydrolyzed, but rates on arylamides are exceedingly low.. The catalysed reaction is Release of an N-terminal amino acid, preferentially leucine, but not glutamic or aspartic acids.. In terms of biological role, presumably involved in the processing and regular turnover of intracellular proteins. Catalyzes the removal of unsubstituted N-terminal amino acids from various peptides. In Sodalis glossinidius (strain morsitans), this protein is Probable cytosol aminopeptidase.